The chain runs to 211 residues: FMN-dependent NADH:quinone oxidoreductase 2 (211 aa).

FMN is bound by residues S10 and 17 to 19 (SRS).

It belongs to the azoreductase type 1 family. In terms of assembly, homodimer. FMN serves as cofactor.

It catalyses the reaction 2 a quinone + NADH + H(+) = 2 a 1,4-benzosemiquinone + NAD(+). The enzyme catalyses N,N-dimethyl-1,4-phenylenediamine + anthranilate + 2 NAD(+) = 2-(4-dimethylaminophenyl)diazenylbenzoate + 2 NADH + 2 H(+). In terms of biological role, quinone reductase that provides resistance to thiol-specific stress caused by electrophilic quinones. Its function is as follows. Also exhibits azoreductase activity. Catalyzes the reductive cleavage of the azo bond in aromatic azo compounds to the corresponding amines. The sequence is that of FMN-dependent NADH:quinone oxidoreductase 2 from Listeria monocytogenes serovar 1/2a (strain ATCC BAA-679 / EGD-e).